A 1533-amino-acid polypeptide reads, in one-letter code: MEVSPLQPVNENMQVNKTKKNEEAKKRLSIERIYQKKTQLEHILLRPDTYIGSVESVTQQMWVYDEDIGINYREVTFVPGLYKIFDEILVNAADNKQRDPKMSCIRVTIDPENNLISIWNNGKGIPVVEHKVEKMYVPALIFGQLLTSSNYDDEEKKVTGGRNGYGAKLCNIFSTKFTVETASREYKKMFKQTWMDNMGRAGEMELKPFNGEDYTCITFHPDLSKFKMQSLDKDIVALMVRRAYDIAGSTKDVKVFLNGNKLPVKGFRSYVDLYLKDKVDETGNPLKIIHEQVNHRWEVCLTMSEKGFQQISFVNSIATSKGGRHVDYVADQIVAKLVDVVKKKNKGGVAVKAHQVKNHMWIFVNALIENPTFDSQTKENMTLQVKSFGSTCQLSEKFIKAAIGCGIVESILNWVKFKAQVQLNKKCSAVKHNRIKGIPKLDDANDAGGRNSTECTLILTEGDSAKTLAVSGLGVVGRDKYGVFPLRGKILNVREASHKQIMENAEINNIIKIVGLQYKKNYEDEDSLKTLRYGKIMIMTDQDQDGSHIKGLLINFIHHNWPSLLRHRFLEEFITPIVKVSKNKQEMAFYSLPEFEEWKSSTPNHKKWKVKYYKGLGTSTSKEAKEYFADMKRHRIQFKYSGPEDDAAISLAFSKKQIDDRKEWLTHFMEDRRQRKLLGLPEDYLYGQTTTYLTYNDFINKELILFSNSDNERSIPSMVDGLKPGQRKVLFTCFKRNDKREVKVAQLAGSVAEMSSYHHGEMSLMMTIINLAQNFVGSNNLNLLQPIGQFGTRLHGGKDSASPRYIFTMLSPLARLLFPPKDDHTLKFLYDDNQRVEPEWYIPIIPMVLINGAEGIGTGWSCKIPNFDVREVVNNIRLLMDGEEPLPMLPSYKNFKGTIEELAPNQYVISGEVAILNSTTIEISELPIRTWTQTYKEQVLEPMLNGTEKTPPLITDYREYHTDTTVKFVVKMTEEKLAEAERVGLHKVFKLQTSLTCNSMVLFDHVGCLKKYDTVLDILRDFFELRLKYYGLRKEWLLGMLGAESAKLNNQARFILEKIDGKIIIENKPKKELIKVLIQRGYDSDPVKAWKEAQQKVPDEEENEESDNEKEADKSDSVADSGPTFNYLLDMPLWYLTKEKKDELCKLRNEKEQELETLKRKSPSDLWKEDLAAFIEELEAVEAKEKQDEQIGLPGKGGKAKGKKTQMAEVLPSPCGKRVIPRVTVEMKAEAEKKIKKKIKSENTEGSPQEDGMEVEGLKQRLEKKQKREPGTKTKKQTTLPFKPIKKAKKRNPWSDSESDISSDESNFNVPPREKEPRRAAAKTKFTVDLDSDEDFSDADEKTRDEDFVPSDTSPQKAETSPKHTNKEPKPQKSTPSVSDFDADDAKDNVPPSPSSPVADFPAVTETIKPVSKKNVTVKKTAAKSQSSTSTTGAKKRAAPKGAKKDPDLDSDVSKKPNPPKPKGRRKRKPSTSDDSDSNFEKMISKAVTSKKPKGESDDFHLDLDLAVASRAKSGRTKKPIKYLEESDEDDLF.

M1 bears the N-acetylmethionine mark. The disordered stretch occupies residues 1-22; the sequence is MEVSPLQPVNENMQVNKTKKNE. The residue at position 4 (S4) is a Phosphoserine. The span at 7-16 shows a compositional bias: polar residues; the sequence is QPVNENMQVN. A Glycyl lysine isopeptide (Lys-Gly) (interchain with G-Cter in SUMO2) cross-link involves residue K17. ATP contacts are provided by residues N91, N120, and 148–150; that span reads SSN. Residues K156 and K157 each participate in a glycyl lysine isopeptide (Lys-Gly) (interchain with G-Cter in SUMO2) cross-link. Residue 161–168 participates in ATP binding; the sequence is GRNGYGAK. K261 participates in a covalent cross-link: Glycyl lysine isopeptide (Lys-Gly) (interchain with G-Cter in SUMO2). T282 bears the Phosphothreonine mark. Residues 342-344 are interaction with DNA; sequence KKK. K352 participates in a covalent cross-link: Glycyl lysine isopeptide (Lys-Gly) (interchain with G-Cter in SUMO2). 376-378 contributes to the ATP binding site; sequence QTK. Glycyl lysine isopeptide (Lys-Gly) (interchain with G-Cter in SUMO2) cross-links involve residues K386, K397, K416, K418, K425, and K440. The Toprim domain occupies 455-572; the sequence is CTLILTEGDS…SLLRHRFLEE (118 aa). E461 contacts Mg(2+). Glycyl lysine isopeptide (Lys-Gly) (interchain with G-Cter in SUMO2) cross-links involve residues K466, K480, and K529. Mg(2+)-binding residues include D541 and D543. Residues K584, K599, K614, K622, K625, K632, K639, K655, K662, and K676 each participate in a glycyl lysine isopeptide (Lys-Gly) (interchain with G-Cter in SUMO2) cross-link. The region spanning 715–1171 is the Topo IIA-type catalytic domain; the sequence is IPSMVDGLKP…SPSDLWKEDL (457 aa). Residue Y805 is the O-(5'-phospho-DNA)-tyrosine intermediate of the active site. The interval 990–999 is interaction with DNA; it reads KLQTSLTCNS. K1075 participates in a covalent cross-link: Glycyl lysine isopeptide (Lys-Gly) (interchain with G-Cter in SUMO2). 2 disordered regions span residues 1090–1121 and 1183–1215; these read WKEAQQKVPDEEENEESDNEKEADKSDSVADS and AKEKQDEQIGLPGKGGKAKGKKTQMAEVLPSPC. The span at 1099–1108 shows a compositional bias: acidic residues; sequence DEEENEESDN. The residue at position 1106 (S1106) is a Phosphoserine; by CK1. Residues K1114, K1196, and K1204 each participate in a glycyl lysine isopeptide (Lys-Gly) (interchain with G-Cter in SUMO2) cross-link. T1205 is modified (phosphothreonine). S1213 bears the Phosphoserine mark. Residue K1228 forms a Glycyl lysine isopeptide (Lys-Gly) (interchain with G-Cter in SUMO2) linkage. The disordered stretch occupies residues 1231-1533; that stretch reads AEKKIKKKIK…LEESDEDDLF (303 aa). A Glycyl lysine isopeptide (Lys-Gly) (interchain with G-Cter in SUMO1); alternate cross-link involves residue K1240. K1240 is covalently cross-linked (Glycyl lysine isopeptide (Lys-Gly) (interchain with G-Cter in SUMO2); alternate). T1244 carries the post-translational modification Phosphothreonine. At S1247 the chain carries Phosphoserine. Residues 1256 to 1272 show a composition bias toward basic and acidic residues; that stretch reads EGLKQRLEKKQKREPGT. Glycyl lysine isopeptide (Lys-Gly) (interchain with G-Cter in SUMO2) cross-links involve residues K1259, K1276, K1283, and K1286. Phosphoserine occurs at positions 1295, 1297, 1299, and 1302. At T1327 the chain carries Phosphothreonine. S1332 and S1337 each carry phosphoserine. T1343 bears the Phosphothreonine mark. Phosphoserine occurs at positions 1351 and 1354. Basic and acidic residues predominate over residues 1360–1371; it reads TSPKHTNKEPKP. Glycyl lysine isopeptide (Lys-Gly) (interchain with G-Cter in SUMO2) cross-links involve residues K1363, K1367, and K1373. Phosphoserine occurs at positions 1374 and 1377. Residue K1387 forms a Glycyl lysine isopeptide (Lys-Gly) (interchain with G-Cter in SUMO2) linkage. 2 positions are modified to phosphoserine: S1393 and S1395. The span at 1409–1433 shows a compositional bias: low complexity; sequence KPVSKKNVTVKKTAAKSQSSTSTTG. K1424 is covalently cross-linked (Glycyl lysine isopeptide (Lys-Gly) (interchain with G-Cter in SUMO2); alternate). K1424 is subject to N6-acetyllysine; alternate. An interaction with PLSCR1 region spans residues 1435 to 1441; sequence KKRAAPK. The segment covering 1443 to 1455 has biased composition (basic and acidic residues); the sequence is AKKDPDLDSDVSK. A Glycyl lysine isopeptide (Lys-Gly) (interchain with G-Cter in SUMO2); alternate cross-link involves residue K1444. Residue K1444 is modified to N6-acetyllysine; alternate. The residue at position 1451 (S1451) is a Phosphoserine. Residues K1456 and K1461 each participate in a glycyl lysine isopeptide (Lys-Gly) (interchain with G-Cter in SUMO2) cross-link. S1471 carries the phosphoserine modification. Position 1472 is a phosphothreonine (T1472). Residues S1473, S1476, and S1478 each carry the phosphoserine modification. Residues K1486 and K1494 each participate in a glycyl lysine isopeptide (Lys-Gly) (interchain with G-Cter in SUMO2) cross-link. Residues 1493–1504 show a composition bias toward basic and acidic residues; that stretch reads PKGESDDFHLDL. 2 positions are modified to phosphoserine: S1497 and S1527.

This sequence belongs to the type II topoisomerase family. As to quaternary structure, homodimer. Interacts with COPS5. Interacts with RECQL5; this stimulates DNA decatenation. Interacts with SETMAR; stimulates the topoisomerase activity. Interacts with DHX9; this interaction occurs in a E2 enzyme UBE2I- and RNA-dependent manner, negatively regulates DHX9-mediated double-stranded DNA and RNA duplex helicase activity and stimulates TOP2A-mediated supercoiled DNA relaxation activity. Interacts with HNRNPU (via C-terminus); this interaction protects the topoisomerase TOP2A from degradation and positively regulates the relaxation of supercoiled DNA in a RNA-dependent manner. Interacts with MCM3AP. Interacts with ERCC6. Interacts with PLSCR1. Interacts with GCNA; this interaction allows the resolution of topoisomerase II (TOP2A) DNA-protein cross-links. Interacts with POL1RA/RPA1 (via dock II) and UBTF in the context of Pol I complex; may assist Pol I transcription initiation by releasing supercoils occurring during DNA unwinding. Interacts with TPRN; TPRN interacts with a number of DNA damage response proteins, is recruited to sites of DNA damage and may play a role in DNA damage repair. It depends on Mg(2+) as a cofactor. Mn(2+) serves as cofactor. The cofactor is Ca(2+). Post-translationally, phosphorylation has no effect on catalytic activity. However, phosphorylation at Ser-1106 by CSNK1D/CK1 promotes DNA cleavable complex formation.

The protein localises to the cytoplasm. It localises to the nucleus. Its subcellular location is the nucleoplasm. The protein resides in the nucleolus. It carries out the reaction ATP-dependent breakage, passage and rejoining of double-stranded DNA.. Key decatenating enzyme that alters DNA topology by binding to two double-stranded DNA molecules, generating a double-stranded break in one of the strands, passing the intact strand through the broken strand, and religating the broken strand. May play a role in regulating the period length of BMAL1 transcriptional oscillation. The sequence is that of DNA topoisomerase 2-alpha (TOP2A) from Sus scrofa (Pig).